The following is a 294-amino-acid chain: Acetaldehyde dehydrogenase (294 aa).

Position 11-14 (11-14 (SGNI)) interacts with NAD(+). The active-site Acyl-thioester intermediate is the C126. Residues 157 to 165 (SAGPGTRAN) and N269 each bind NAD(+).

Belongs to the acetaldehyde dehydrogenase family.

It carries out the reaction acetaldehyde + NAD(+) + CoA = acetyl-CoA + NADH + H(+). The polypeptide is Acetaldehyde dehydrogenase (pheF) (Geobacillus stearothermophilus (Bacillus stearothermophilus)).